The following is a 386-amino-acid chain: uncharacterized protein (386 aa).

Residues 29–76 (KYWKFLNEDCKIEVLKYLDYCSRCQLSICSKSDHKLVSITPLYVYEIE) form the F-box domain.

This is an uncharacterized protein from Caenorhabditis elegans.